Here is a 94-residue protein sequence, read N- to C-terminus: Integration host factor subunit beta (94 aa).

This sequence belongs to the bacterial histone-like protein family. As to quaternary structure, heterodimer of an alpha and a beta chain.

In terms of biological role, this protein is one of the two subunits of integration host factor, a specific DNA-binding protein that functions in genetic recombination as well as in transcriptional and translational control. The protein is Integration host factor subunit beta of Citrobacter koseri (strain ATCC BAA-895 / CDC 4225-83 / SGSC4696).